Here is a 364-residue protein sequence, read N- to C-terminus: MEKLNLLGFLIITLNCNVTIMGMIWLIVEVLLRMLVVVLAGSPIYEDEQERFICNTLQPGCANVCYDLFSPVSPLRFWLVQSLALLLPSVVFGTYTLHRGAKLAAVGGACRPQVPDLSTAYLVHLLLRMLLEAGLAFLHYFLFGFSVPARVSCSHVPCSGAVDCYVSRPTEKSLLILFFWAVSALSFLLSLADLLWILPRRKTLRTTQWVNGEARPVCEVPAPPPCLLQNPQGYLSQGQVDQEDRQEEQVVPEFPCMWTAGQSDNSNVGQACVSGLLEHSDQDASEATSSAGDRLTVAHTAHELRFHRETSLDLGGKNTQADELSLATQSHLARHSSASKPQAPCRLTTSGSAPHLRTKKSEWV.

Topologically, residues 1–19 (MEKLNLLGFLIITLNCNVT) are cytoplasmic. A helical transmembrane segment spans residues 20 to 40 (IMGMIWLIVEVLLRMLVVVLA). Residues 41 to 76 (GSPIYEDEQERFICNTLQPGCANVCYDLFSPVSPLR) are Extracellular-facing. The helical transmembrane segment at 77–97 (FWLVQSLALLLPSVVFGTYTL) threads the bilayer. Topologically, residues 98 to 128 (HRGAKLAAVGGACRPQVPDLSTAYLVHLLLR) are cytoplasmic. A helical membrane pass occupies residues 129–149 (MLLEAGLAFLHYFLFGFSVPA). Residues 150-173 (RVSCSHVPCSGAVDCYVSRPTEKS) lie on the Extracellular side of the membrane. The chain crosses the membrane as a helical span at residues 174–194 (LLILFFWAVSALSFLLSLADL). The Cytoplasmic portion of the chain corresponds to 195-364 (LWILPRRKTL…HLRTKKSEWV (170 aa)). A compositionally biased stretch (polar residues) spans 331-340 (HLARHSSASK). A disordered region spans residues 331-364 (HLARHSSASKPQAPCRLTTSGSAPHLRTKKSEWV).

It belongs to the connexin family. Delta-type subfamily. In terms of assembly, a connexon is composed of a hexamer of connexins.

It localises to the cell membrane. Its subcellular location is the cell junction. The protein resides in the gap junction. Its function is as follows. One gap junction consists of a cluster of closely packed pairs of transmembrane channels, the connexons, through which materials of low MW diffuse from one cell to a neighboring cell. This Mus musculus (Mouse) protein is Gap junction delta-4 protein (Gjd4).